The following is a 562-amino-acid chain: Probable Xaa-Pro aminopeptidase PEPP (562 aa).

Aspartate 358, aspartate 369, glutamate 492, and glutamate 532 together coordinate Mn(2+).

Belongs to the peptidase M24B family. Mn(2+) is required as a cofactor.

The catalysed reaction is Release of any N-terminal amino acid, including proline, that is linked to proline, even from a dipeptide or tripeptide.. In terms of biological role, catalyzes the removal of a penultimate prolyl residue from the N-termini of peptides. In Leptosphaeria maculans (strain JN3 / isolate v23.1.3 / race Av1-4-5-6-7-8) (Blackleg fungus), this protein is Probable Xaa-Pro aminopeptidase PEPP (PEPP).